The sequence spans 444 residues: tRNA-2-methylthio-N(6)-dimethylallyladenosine synthase (444 aa).

An MTTase N-terminal domain is found at 2 to 119 (KKVYIKTFGC…LPDLIESRKQ (118 aa)). Cys-11, Cys-48, Cys-82, Cys-156, Cys-160, and Cys-163 together coordinate [4Fe-4S] cluster. The Radical SAM core domain occupies 142 to 374 (KVDGGAAFVS…NEVIEAKGYA (233 aa)). Residues 377–440 (QSMVGTVQRV…PHSLAGEALT (64 aa)) enclose the TRAM domain.

This sequence belongs to the methylthiotransferase family. MiaB subfamily. In terms of assembly, monomer. It depends on [4Fe-4S] cluster as a cofactor.

It localises to the cytoplasm. The catalysed reaction is N(6)-dimethylallyladenosine(37) in tRNA + (sulfur carrier)-SH + AH2 + 2 S-adenosyl-L-methionine = 2-methylsulfanyl-N(6)-dimethylallyladenosine(37) in tRNA + (sulfur carrier)-H + 5'-deoxyadenosine + L-methionine + A + S-adenosyl-L-homocysteine + 2 H(+). Functionally, catalyzes the methylthiolation of N6-(dimethylallyl)adenosine (i(6)A), leading to the formation of 2-methylthio-N6-(dimethylallyl)adenosine (ms(2)i(6)A) at position 37 in tRNAs that read codons beginning with uridine. The chain is tRNA-2-methylthio-N(6)-dimethylallyladenosine synthase from Chromobacterium violaceum (strain ATCC 12472 / DSM 30191 / JCM 1249 / CCUG 213 / NBRC 12614 / NCIMB 9131 / NCTC 9757 / MK).